A 243-amino-acid polypeptide reads, in one-letter code: Small ribosomal subunit protein mS23 (243 aa).

It belongs to the mitochondrion-specific ribosomal protein mS23 family. Component of the mitochondrial small ribosomal subunit.

It localises to the mitochondrion. In Emericella nidulans (strain FGSC A4 / ATCC 38163 / CBS 112.46 / NRRL 194 / M139) (Aspergillus nidulans), this protein is Small ribosomal subunit protein mS23 (rsm25).